The chain runs to 344 residues: Thioredoxin reductase FGSG_00043 (344 aa).

FAD contacts are provided by residues 12–15 (GGPA), 34–39 (DSVSYR), His-51, and Ala-121. A disulfide bridge connects residues Cys-165 and Cys-168. Residues Asp-314 and 321–322 (FV) each bind FAD.

This sequence belongs to the class-II pyridine nucleotide-disulfide oxidoreductase family. In terms of assembly, homodimer. Requires FAD as cofactor.

It functions in the pathway mycotoxin biosynthesis. Thioredoxin reductase; part of the gene cluster that mediates the biosynthesis of gramillins A and B, bicyclic lipopeptides that induce cell death in maize leaves but not in wheat leaves. The nonribosomal peptide synthetase GRA1 incorporates respectively a glutamic adic (Glu), a leucine (Leu), a serine (Ser), a hydroxyglutamine (HOGln), a 2-amino decanoic acid, and 2 cysteins (CysB and CysA). The biosynthesis of 2-amino decanoic acid incorporated in gramillins could be initiated by a fatty acid synthase composed of the alpha and beta subunits FGSG_00036 and FGSG_11656. The cytochrome P450 monooxygenase FGSG_15680 could hydroxylate the fatty acid chain. Subsequent oxidation to the ketone by the oxidoreductase FGSG_00048 and transamination by aminotransferase FGSG_00049 could form 2-amino-decanoic acid. On the other hand, FGSG_15680 could also be responsible for the HO-modified glutamine at the gamma-position. Whether hydroxylation occurs on the fully assembled product or on the Gln residue prior to assembly into the gramillins requires further proof. The thioredoxin FGSG_00043 could also be required for the disulfide-bond formation between CysA and CysB. The specific involvement of the remaining proteins from the cluster is more difficult to discern, but could have broader regulatory (FGSG_00040 and FGSG_11657) or enzymatic functions (FGSG_00044 and FGSG_00045). The final C-domain of GRA1 does not possess the expected sequence of a termination CT domain, often implicated in macrocyclization and release of a cyclopeptidein fungal NRPs; and the thioesterase FGSG_00047 may act in concert with the terminal C-domain of GRA1 to catalyze the formation of the macrocyclic anhydride and release of the products. The polypeptide is Thioredoxin reductase FGSG_00043 (Gibberella zeae (strain ATCC MYA-4620 / CBS 123657 / FGSC 9075 / NRRL 31084 / PH-1) (Wheat head blight fungus)).